We begin with the raw amino-acid sequence, 336 residues long: Large ribosomal subunit protein uL1 (336 aa).

The large ribosomal subunit protein uL1 stretch occupies residues 1–245 (MANQKKVTNK…VKKTAKGKVI (245 aa)). Positions 246–336 (ADDSAKGENK…DVKKAKTSKK (91 aa)) are unknown. The tract at residues 267 to 336 (AQKKKPSKHP…DVKKAKTSKK (70 aa)) is disordered. Residues 286 to 305 (KKKKVKKILKKAKPAKKAAV) show a composition bias toward basic residues. Residues 306 to 315 (AKKPVVVNKK) are compositionally biased toward low complexity.

The protein belongs to the universal ribosomal protein uL1 family. Part of the 50S ribosomal subunit.

Its function is as follows. Binds directly to 23S rRNA. The L1 stalk is quite mobile in the ribosome, and is involved in E site tRNA release. Protein L1 is also a translational repressor protein, it controls the translation of the L11 operon by binding to its mRNA. The protein is Large ribosomal subunit protein uL1 of Malacoplasma penetrans (strain HF-2) (Mycoplasma penetrans).